Consider the following 194-residue polypeptide: MNWLPESFYARPALVVARELLGALLVVEEGGQRRVGRIVETEAYIGEHDLACHAAKGLTPRTEVMFGPAGVAYVYLIYGMHHCFNVVTDATGAGAAVLVRAVEPVEGLPPGTRTDGPGRLCKALGLTRAHNRRGLCTPVLHLRPGTPVPESAVSRGPRIGVDYAGTWAAEPFRLWVRDSQHVSKGPPPGRRKPA.

The protein belongs to the DNA glycosylase MPG family.

The polypeptide is Putative 3-methyladenine DNA glycosylase (Myxococcus xanthus (strain DK1622)).